We begin with the raw amino-acid sequence, 251 residues long: Chlorophyll a-b binding protein 4, chloroplastic (251 aa).

S35 carries the post-translational modification Phosphoserine. Residue W57 coordinates chlorophyll b. Residues F77 and E96 each contribute to the chlorophyll a site. R101 is a binding site for chlorophyll b. The next 2 membrane-spanning stretches (helical) occupy residues 102 to 122 and 135 to 155; these read WAML…IGII and YFAS…YVEI. S138, V144, E154, and R157 together coordinate chlorophyll b. Chlorophyll a contacts are provided by K204, E205, N208, R210, Q222, and H237.

It belongs to the light-harvesting chlorophyll a/b-binding (LHC) protein family. The LHC complex consists of chlorophyll a-b binding proteins. Red-emitting heterodimer with LHCA1. The cofactor is Binds at least 14 chlorophylls (8 Chl-a and 6 Chl-b) and carotenoids such as lutein and neoxanthin.. Post-translationally, photoregulated by reversible phosphorylation of its threonine residues.

It is found in the plastid. The protein localises to the chloroplast thylakoid membrane. Functionally, the light-harvesting complex (LHC) functions as a light receptor, it captures and delivers excitation energy to photosystems with which it is closely associated. The chain is Chlorophyll a-b binding protein 4, chloroplastic from Arabidopsis thaliana (Mouse-ear cress).